Here is a 209-residue protein sequence, read N- to C-terminus: Lysine-rich arabinogalactan protein 18 (209 aa).

The signal sequence occupies residues Met-1–Gly-21. A disordered region spans residues Gly-21–Ala-185. The segment covering Ser-23–Ser-79 has biased composition (low complexity). Pro residues-rich tracts occupy residues Ser-80–Ala-95 and Ser-103–Val-119. Basic residues predominate over residues Ser-132 to Gln-145. The segment covering Ala-149–Ser-164 has biased composition (pro residues). The GPI-anchor amidated glycine moiety is linked to residue Gly-183. The propeptide at Ala-184–Phe-209 is removed in mature form.

The protein belongs to the lysine-rich AGP family. Post-translationally, O-glycosylated on the hydroxyproline residues. As to expression, predominantly expressed in flowers, and moderately expressed in roots, stems and young leaves.

It is found in the cell membrane. In terms of biological role, proteoglycan that seems to be implicated in diverse developmental roles such as differentiation, cell-cell recognition, embryogenesis and programmed cell death. The polypeptide is Lysine-rich arabinogalactan protein 18 (AGP18) (Arabidopsis thaliana (Mouse-ear cress)).